A 95-amino-acid chain; its full sequence is Large ribosomal subunit protein uL23 (95 aa).

It belongs to the universal ribosomal protein uL23 family. In terms of assembly, part of the 50S ribosomal subunit. Contacts protein L29, and trigger factor when it is bound to the ribosome.

One of the early assembly proteins it binds 23S rRNA. One of the proteins that surrounds the polypeptide exit tunnel on the outside of the ribosome. Forms the main docking site for trigger factor binding to the ribosome. The polypeptide is Large ribosomal subunit protein uL23 (Anoxybacillus flavithermus (strain DSM 21510 / WK1)).